A 760-amino-acid polypeptide reads, in one-letter code: Phosphoribosylformylglycinamidine synthase subunit PurL (760 aa).

Residues 1 to 25 form a disordered region; the sequence is MNMSLPADRDTAKKPSAQKPSAHAQ. H69 is a catalytic residue. 2 residues coordinate ATP: Y72 and K115. E117 is a Mg(2+) binding site. Substrate is bound by residues 118-121 and R140; that span reads SHNH. The active-site Proton acceptor is the H119. Residue D141 participates in Mg(2+) binding. Residue Q265 participates in substrate binding. A Mg(2+)-binding site is contributed by D293. 337–339 lines the substrate pocket; sequence ESQ. Positions 519 and 556 each coordinate ATP. Mg(2+) is bound at residue N557. Residue S559 participates in substrate binding.

This sequence belongs to the FGAMS family. As to quaternary structure, monomer. Part of the FGAM synthase complex composed of 1 PurL, 1 PurQ and 2 PurS subunits.

Its subcellular location is the cytoplasm. It carries out the reaction N(2)-formyl-N(1)-(5-phospho-beta-D-ribosyl)glycinamide + L-glutamine + ATP + H2O = 2-formamido-N(1)-(5-O-phospho-beta-D-ribosyl)acetamidine + L-glutamate + ADP + phosphate + H(+). It functions in the pathway purine metabolism; IMP biosynthesis via de novo pathway; 5-amino-1-(5-phospho-D-ribosyl)imidazole from N(2)-formyl-N(1)-(5-phospho-D-ribosyl)glycinamide: step 1/2. Its function is as follows. Part of the phosphoribosylformylglycinamidine synthase complex involved in the purines biosynthetic pathway. Catalyzes the ATP-dependent conversion of formylglycinamide ribonucleotide (FGAR) and glutamine to yield formylglycinamidine ribonucleotide (FGAM) and glutamate. The FGAM synthase complex is composed of three subunits. PurQ produces an ammonia molecule by converting glutamine to glutamate. PurL transfers the ammonia molecule to FGAR to form FGAM in an ATP-dependent manner. PurS interacts with PurQ and PurL and is thought to assist in the transfer of the ammonia molecule from PurQ to PurL. This is Phosphoribosylformylglycinamidine synthase subunit PurL from Tropheryma whipplei (strain TW08/27) (Whipple's bacillus).